Here is a 227-residue protein sequence, read N- to C-terminus: Glutathione S-transferase U18 (227 aa).

The GST N-terminal domain maps to 4–83 (EDVKLIGSWA…YIDEAWNSSG (80 aa)). Residues 14–15 (SV), 40–41 (SK), 54–55 (KM), and 67–68 (ES) contribute to the glutathione site. The GST C-terminal domain maps to 90-221 (HPYDRAIARF…TKLAEFARKL (132 aa)).

This sequence belongs to the GST superfamily. Tau family.

It is found in the cytoplasm. The protein resides in the cytosol. It catalyses the reaction RX + glutathione = an S-substituted glutathione + a halide anion + H(+). May be involved in the conjugation of reduced glutathione to a wide number of exogenous and endogenous hydrophobic electrophiles and have a detoxification role against certain herbicides. This is Glutathione S-transferase U18 (GSTU18) from Arabidopsis thaliana (Mouse-ear cress).